The chain runs to 199 residues: Putative lectin L633 (199 aa).

The signal sequence occupies residues 1 to 25 (MNILLLLMLLTSIILLVILIFLAYN). Residues 35–48 (CITPAPESQSISPD) are compositionally biased toward polar residues. Positions 35 to 74 (CITPAPESQSISPDQTTQLQTTTPVTSTPSNPTPTTIIPN) are disordered. Over residues 49 to 73 (QTTQLQTTTPVTSTPSNPTPTTIIP) the composition is skewed to low complexity. In terms of domain architecture, Bulb-type lectin spans 84-195 (EIVSNGDNVL…LGQELWCATR (112 aa)). Asn-121 carries N-linked (GlcNAc...) asparagine; by host glycosylation.

It is found in the secreted. The protein is Putative lectin L633 of Acanthamoeba polyphaga (Amoeba).